A 142-amino-acid chain; its full sequence is MRRVIAQGTFDILHPGHVHYLSDAASLGDELHVIIARGENVTHKPKPILDGRQRRDMVAALDVVDEAHLGHVEDIFVPIEEIDPDVIVLGYDQHHDEDGIKAALDARGIDCEVTRATPRELRHDDELLSTGRIIDRIVERRC.

ATP is bound by residues Thr9 to Phe10, His14 to His17, and Asp92.

It belongs to the archaeal FAD synthase family. In terms of assembly, homodimer. A divalent metal cation serves as cofactor.

It carries out the reaction FMN + ATP + H(+) = FAD + diphosphate. The protein operates within cofactor biosynthesis; FAD biosynthesis; FAD from FMN: step 1/1. Functionally, catalyzes the transfer of the AMP portion of ATP to flavin mononucleotide (FMN) to produce flavin adenine dinucleotide (FAD) coenzyme. The polypeptide is FAD synthase (Haloferax volcanii (strain ATCC 29605 / DSM 3757 / JCM 8879 / NBRC 14742 / NCIMB 2012 / VKM B-1768 / DS2) (Halobacterium volcanii)).